A 575-amino-acid chain; its full sequence is Inactive terpenoid synthase 20, chloroplastic (575 aa).

Residues 1-52 (MEAITKNGSLSQTLVHCGPKSLSSFIPVRCLRFSKNPFPKKLVVTRARTSIN) constitute a chloroplast transit peptide. Mg(2+) contacts are provided by D332, D336, D474, T478, and E482. A DDXXD motif motif is present at residues 332 to 336 (DDLYD).

It belongs to the terpene synthase family. Tpsa subfamily. As to expression, predominantly expressed in roots but also in leaves and stems.

The protein resides in the plastid. It localises to the chloroplast. Does not possess diterpene synthase activity. The sequence is that of Inactive terpenoid synthase 20, chloroplastic from Arabidopsis thaliana (Mouse-ear cress).